Reading from the N-terminus, the 203-residue chain is MKELILASASPRRKEILDSLGVLFSVKISNFDESSITEKDPVKRCILTARGKAENLFKTLPQNEGAQKLILAADTLVFAENTAFPNEKIIFGKPKNEKEAEMMLKSHSGSLHFVVSAICLLDCKTGQINEKHSVSKVFFKKLSDKEISAYLKTDEWKDAAGAYKIQGKASFFIEKIEGSYTGIVGLPVRELYEILNKTEFRIL.

Catalysis depends on D74, which acts as the Proton acceptor.

This sequence belongs to the Maf family. YhdE subfamily. A divalent metal cation is required as a cofactor.

It is found in the cytoplasm. It catalyses the reaction dTTP + H2O = dTMP + diphosphate + H(+). The catalysed reaction is UTP + H2O = UMP + diphosphate + H(+). In terms of biological role, nucleoside triphosphate pyrophosphatase that hydrolyzes dTTP and UTP. May have a dual role in cell division arrest and in preventing the incorporation of modified nucleotides into cellular nucleic acids. The polypeptide is dTTP/UTP pyrophosphatase (Treponema denticola (strain ATCC 35405 / DSM 14222 / CIP 103919 / JCM 8153 / KCTC 15104)).